The following is a 1394-amino-acid chain: DNA-directed RNA polymerase subunit beta' (1394 aa).

4 residues coordinate Zn(2+): Cys71, Cys73, Cys86, and Cys89. Mg(2+) is bound by residues Asp462, Asp464, and Asp466. Zn(2+)-binding residues include Cys810, Cys883, Cys890, and Cys893.

Belongs to the RNA polymerase beta' chain family. As to quaternary structure, the RNAP catalytic core consists of 2 alpha, 1 beta, 1 beta' and 1 omega subunit. When a sigma factor is associated with the core the holoenzyme is formed, which can initiate transcription. It depends on Mg(2+) as a cofactor. The cofactor is Zn(2+).

It catalyses the reaction RNA(n) + a ribonucleoside 5'-triphosphate = RNA(n+1) + diphosphate. In terms of biological role, DNA-dependent RNA polymerase catalyzes the transcription of DNA into RNA using the four ribonucleoside triphosphates as substrates. The polypeptide is DNA-directed RNA polymerase subunit beta' (Beijerinckia indica subsp. indica (strain ATCC 9039 / DSM 1715 / NCIMB 8712)).